A 239-amino-acid polypeptide reads, in one-letter code: Ribosomal RNA large subunit methyltransferase E (239 aa).

Residues G81, W83, D104, D120, and D144 each coordinate S-adenosyl-L-methionine. K184 (proton acceptor) is an active-site residue.

Belongs to the class I-like SAM-binding methyltransferase superfamily. RNA methyltransferase RlmE family.

It localises to the cytoplasm. The enzyme catalyses uridine(2552) in 23S rRNA + S-adenosyl-L-methionine = 2'-O-methyluridine(2552) in 23S rRNA + S-adenosyl-L-homocysteine + H(+). In terms of biological role, specifically methylates the uridine in position 2552 of 23S rRNA at the 2'-O position of the ribose in the fully assembled 50S ribosomal subunit. The protein is Ribosomal RNA large subunit methyltransferase E of Rhizobium rhizogenes (strain K84 / ATCC BAA-868) (Agrobacterium radiobacter).